We begin with the raw amino-acid sequence, 420 residues long: CinA-like protein (420 aa).

This sequence belongs to the CinA family.

The sequence is that of CinA-like protein from Chloroherpeton thalassium (strain ATCC 35110 / GB-78).